Reading from the N-terminus, the 116-residue chain is Ly-6/neurotoxin-like protein 1 (116 aa).

A signal peptide spans 1 to 20 (MTPLLTLFLVALIGLPLAQA). A UPAR/Ly6 domain is found at 21–105 (LDCHVCAYNG…FAAPATLALA (85 aa)). 5 disulfides stabilise this stretch: C23-C46, C26-C33, C39-C64, C68-C85, and C86-C91. The GPI-anchor amidated asparagine moiety is linked to residue N92. Residues 93 to 116 (GAGFAAPATLALAPILLATLWGLL) constitute a propeptide, removed in mature form.

In terms of assembly, interacts with nAChRs containing alpha-4:beta-2 (CHRNA4:CHRNB2) and alpha-7 (CHRNA7) subunits. Interacts with CHRNA4 probably in the endoplasmic reticulum prior to nAChR pentameric assembly. Interacts with KCNA2/Potassium voltage-gated channel subfamily A member 2.

It is found in the cell membrane. The protein resides in the cell projection. It localises to the dendrite. The protein localises to the endoplasmic reticulum. Functionally, acts in different tissues through interaction to nicotinic acetylcholine receptors (nAChRs). The proposed role as modulator of nAChR activity seems to be dependent on the nAChR subtype and stoichiometry, and to involve an effect on nAChR trafficking and its cell surface expression, and on single channel properties of the nAChR inserted in the plasma membrane. Modulates functional properties of nicotinic acetylcholine receptors (nAChRs) to prevent excessive excitation, and hence neurodegeneration. Enhances desensitization by increasing both the rate and extent of desensitization of alpha-4:beta-2-containing nAChRs and slowing recovery from desensitization. Promotes large amplitude ACh-evoked currents through alpha-4:beta-2 nAChRs. Is involved in regulation of the nAChR pentameric assembly in the endoplasmic reticulum. Shifts stoichiometry from high sensitivity alpha-4(2):beta-2(3) to low sensitivity alpha-4(3):beta-2(2) nAChR. In vitro modulates alpha-3:beta-4-containing nAChRs. Reduces cell surface expression of (alpha-3:beta-4)(2):beta-4 and (alpha-3:beta-4)(2):alpha-5 nAChRs suggesting an interaction with nAChR alpha-3(-):(+)beta-4 subunit interfaces and an allosteric mode. Corresponding single channel effects characterized by decreased unitary conductance, altered burst proportions and enhanced desensitization/inactivation seem to depend on nAChR alpha:alpha subunit interfaces and are greater in (alpha-3:beta-2)(2):alpha-3 when compared to (alpha-3:beta-2)(2):alpha-5 nAChRs. Prevents plasticity in the primary visual cortex late in life. The polypeptide is Ly-6/neurotoxin-like protein 1 (Saimiri boliviensis boliviensis (Bolivian squirrel monkey)).